The sequence spans 174 residues: Transcription antitermination protein NusB (174 aa).

Belongs to the NusB family.

Functionally, involved in transcription antitermination. Required for transcription of ribosomal RNA (rRNA) genes. Binds specifically to the boxA antiterminator sequence of the ribosomal RNA (rrn) operons. The sequence is that of Transcription antitermination protein NusB from Rhodopseudomonas palustris (strain TIE-1).